Here is a 530-residue protein sequence, read N- to C-terminus: Autoinducer-2 kinase (530 aa).

Belongs to the FGGY kinase family.

It is found in the cytoplasm. It carries out the reaction (S)-4,5-dihydroxypentane-2,3-dione + ATP = (2S)-2-hydroxy-3,4-dioxopentyl phosphate + ADP + H(+). In terms of biological role, catalyzes the phosphorylation of autoinducer-2 (AI-2) to phospho-AI-2, which subsequently inactivates the transcriptional regulator LsrR and leads to the transcription of the lsr operon. Phosphorylates the ring-open form of (S)-4,5-dihydroxypentane-2,3-dione (DPD), which is the precursor to all AI-2 signaling molecules, at the C5 position. The polypeptide is Autoinducer-2 kinase (Salmonella typhimurium (strain LT2 / SGSC1412 / ATCC 700720)).